The primary structure comprises 1396 residues: Sterol 3-beta-glucosyltransferase (1396 aa).

Residues 1–16 are compositionally biased toward basic and acidic residues; sequence MRPFIDDAKRRAERRL. 4 disordered regions span residues 1 to 21, 40 to 64, 83 to 196, and 209 to 232; these read MRPF…ASRQ, DADD…MQYM, ARFD…RAAP, and ETEN…KKSQ. Positions 94-107 are enriched in basic and acidic residues; sequence ETRTRPRFLSEKPF. Residues 186–196 are compositionally biased toward low complexity; the sequence is RPRSATPRAAP. Positions 238 to 273 constitute a GRAM 1 domain; sequence RQLMEMFRFPTPEKVVVEYACSLLQSMLLQGYMYVT. In terms of domain architecture, PH spans 289-388; that stretch reads RVIKSGYIYK…WVRALQKVIF (100 aa). Disordered regions lie at residues 460–532 and 571–627; these read GTPT…SSSS and TIHT…ESKD. Composition is skewed to polar residues over residues 484-532 and 571-584; these read GSQN…SSSS and TIHT…GTAR. Residues 588-602 are compositionally biased toward basic and acidic residues; that stretch reads RHSDEITRSTTEHGL. Positions 717 to 783 constitute a GRAM 2 domain; it reads ERFRAHFALP…HDIENVEKEK (67 aa). Residues Ser905, Arg906, Asp908, Ala1208, His1210, His1223, Gly1227, Thr1228, Asp1247, and Gln1248 each coordinate UDP-alpha-D-glucose. Over residues 1324–1343 the composition is skewed to low complexity; that stretch reads SSISSTPFSPTPSTKTSDDQ. The interval 1324 to 1346 is disordered; that stretch reads SSISSTPFSPTPSTKTSDDQNAN.

Belongs to the glycosyltransferase 28 family.

It localises to the cytoplasm. The protein localises to the preautophagosomal structure membrane. It catalyses the reaction a sterol + UDP-alpha-D-glucose = a sterol 3-beta-D-glucoside + UDP + H(+). It carries out the reaction ergosterol + UDP-alpha-D-glucose = ergosteryl 3-beta-D-glucoside + UDP + H(+). Its function is as follows. Sterol glycosyltransferase responsible for the glycosylation of ergosterol to form ergosterol-glucoside. The sequence is that of Sterol 3-beta-glucosyltransferase from Emericella nidulans (strain FGSC A4 / ATCC 38163 / CBS 112.46 / NRRL 194 / M139) (Aspergillus nidulans).